The following is a 431-amino-acid chain: Tol-Pal system protein TolB (431 aa).

Residues methionine 1–alanine 26 form the signal peptide. The disordered stretch occupies residues aspartate 406–glutamine 431.

Belongs to the TolB family. As to quaternary structure, the Tol-Pal system is composed of five core proteins: the inner membrane proteins TolA, TolQ and TolR, the periplasmic protein TolB and the outer membrane protein Pal. They form a network linking the inner and outer membranes and the peptidoglycan layer.

It is found in the periplasm. In terms of biological role, part of the Tol-Pal system, which plays a role in outer membrane invagination during cell division and is important for maintaining outer membrane integrity. This Burkholderia cenocepacia (strain ATCC BAA-245 / DSM 16553 / LMG 16656 / NCTC 13227 / J2315 / CF5610) (Burkholderia cepacia (strain J2315)) protein is Tol-Pal system protein TolB.